A 196-amino-acid polypeptide reads, in one-letter code: Peptide methionine sulfoxide reductase MsrA 2 (196 aa).

Cys36 is a catalytic residue.

This sequence belongs to the MsrA Met sulfoxide reductase family.

It catalyses the reaction L-methionyl-[protein] + [thioredoxin]-disulfide + H2O = L-methionyl-(S)-S-oxide-[protein] + [thioredoxin]-dithiol. It carries out the reaction [thioredoxin]-disulfide + L-methionine + H2O = L-methionine (S)-S-oxide + [thioredoxin]-dithiol. Its function is as follows. Has an important function as a repair enzyme for proteins that have been inactivated by oxidation. Catalyzes the reversible oxidation-reduction of methionine sulfoxide in proteins to methionine. The chain is Peptide methionine sulfoxide reductase MsrA 2 (msrA2) from Caulobacter vibrioides (strain ATCC 19089 / CIP 103742 / CB 15) (Caulobacter crescentus).